The chain runs to 612 residues: Baeyer-Villiger monooxygenase 4 (612 aa).

FAD contacts are provided by residues Glu-99, 107 to 110 (TWYW), Asp-119, Tyr-125, and Ala-169. 117–119 (QCD) provides a ligand contact to NADP(+). NADP(+)-binding positions include 253 to 259 (TGATGVQ), 276 to 277 (RT), and 393 to 394 (KR).

The protein belongs to the FAD-binding monooxygenase family. Requires FAD as cofactor.

Functionally, catalyzes a Baeyer-Villiger oxidation reaction, i.e. the insertion of an oxygen atom into a carbon-carbon bond adjacent to a carbonyl, which converts ketones to esters or lactones using NADPH as an electron donor. Has a broad substrate scope and oxidizes different compounds including substituted and unsubstituted alicyclic, bicyclic-, aliphatic-ketones, ketones with an aromatic moiety, and sulfides. The highest activities are measured for 2- and 3-methylcyclohexanone, phenylacetone, bicyclo[3.2.0]hept-2-en-6-one and menthone. Cannot use NADH instead of NADPH. Is not active on benzaldehyde. This Dietzia sp. (strain D5) protein is Baeyer-Villiger monooxygenase 4.